We begin with the raw amino-acid sequence, 328 residues long: Ferredoxin--NADP reductase (328 aa).

Residues E36, Q44, Y49, V89, F123, D284, and T324 each coordinate FAD.

Belongs to the ferredoxin--NADP reductase type 2 family. In terms of assembly, homodimer. FAD is required as a cofactor.

The enzyme catalyses 2 reduced [2Fe-2S]-[ferredoxin] + NADP(+) + H(+) = 2 oxidized [2Fe-2S]-[ferredoxin] + NADPH. The polypeptide is Ferredoxin--NADP reductase (Lacticaseibacillus paracasei (strain ATCC 334 / BCRC 17002 / CCUG 31169 / CIP 107868 / KCTC 3260 / NRRL B-441) (Lactobacillus paracasei)).